Here is a 484-residue protein sequence, read N- to C-terminus: GRIP domain-containing protein RUD3 (484 aa).

Over residues 1–15 (MGKNKKKTGKKAKSH) the composition is skewed to basic residues. The interval 1-75 (MGKNKKKTGK…GVDKQKVNDG (75 aa)) is disordered. The segment covering 16–30 (PHVEDVDETVNKPEE) has biased composition (basic and acidic residues). A phosphoserine mark is found at serine 55 and serine 64. Positions 61–72 (KDLSEGVDKQKV) are enriched in basic and acidic residues. The stretch at 84–383 (LEDKKAGDEM…LQIGKLRHEA (300 aa)) forms a coiled coil. Residues 401–452 (SDSESVDKELISNLLISFVSIPRADPRKFEVLELLSNFLNWDEDKKQQAGLI) enclose the GRIP domain. Residue serine 468 is modified to Phosphoserine.

The protein localises to the golgi apparatus lumen. Its function is as follows. Involved in the structural organization of the cis-Golgi and in vesicle targeting/fusion stages of ER to Golgi transport. The polypeptide is GRIP domain-containing protein RUD3 (RUD3) (Saccharomyces cerevisiae (strain ATCC 204508 / S288c) (Baker's yeast)).